A 208-amino-acid polypeptide reads, in one-letter code: FMN-dependent NADH:quinone oxidoreductase (208 aa).

FMN is bound by residues 17–19 (SNS), 99–102 (MWNL), and 143–146 (SRGG).

Belongs to the azoreductase type 1 family. In terms of assembly, homodimer. It depends on FMN as a cofactor.

The enzyme catalyses 2 a quinone + NADH + H(+) = 2 a 1,4-benzosemiquinone + NAD(+). It carries out the reaction N,N-dimethyl-1,4-phenylenediamine + anthranilate + 2 NAD(+) = 2-(4-dimethylaminophenyl)diazenylbenzoate + 2 NADH + 2 H(+). Quinone reductase that provides resistance to thiol-specific stress caused by electrophilic quinones. Its function is as follows. Also exhibits azoreductase activity. Catalyzes the reductive cleavage of the azo bond in aromatic azo compounds to the corresponding amines. This Staphylococcus carnosus (strain TM300) protein is FMN-dependent NADH:quinone oxidoreductase.